The following is a 409-amino-acid chain: Forkhead box protein A2 (409 aa).

Positions 150–241 (AKPPYSYISL…GNMFENGCYL (92 aa)) form a DNA-binding region, fork-head. Positions 250-262 (DKKLSKDPSRKTS) are enriched in basic and acidic residues. The interval 250–315 (DKKLSKDPSR…AASPTSQAQH (66 aa)) is disordered. Residues 263–286 (EGGSNSSSESCNGNESPHSNSSSN) show a composition bias toward low complexity.

The protein resides in the nucleus. May play a crucial role in specification of both the axial mesendoderm and the ventral nervous system. The chain is Forkhead box protein A2 (foxa2) from Danio rerio (Zebrafish).